The primary structure comprises 213 residues: Orotate phosphoribosyltransferase (213 aa).

Lys-26 is a 5-phospho-alpha-D-ribose 1-diphosphate binding site. An orotate-binding site is contributed by Phe-34–Phe-35. Residues Tyr-72–Lys-73, Arg-98, Lys-99, Lys-102, His-104, and Asp-123–Ser-131 contribute to the 5-phospho-alpha-D-ribose 1-diphosphate site. The orotate site is built by Ser-127 and Arg-155.

The protein belongs to the purine/pyrimidine phosphoribosyltransferase family. PyrE subfamily. In terms of assembly, homodimer. Mg(2+) serves as cofactor.

It catalyses the reaction orotidine 5'-phosphate + diphosphate = orotate + 5-phospho-alpha-D-ribose 1-diphosphate. Its pathway is pyrimidine metabolism; UMP biosynthesis via de novo pathway; UMP from orotate: step 1/2. Functionally, catalyzes the transfer of a ribosyl phosphate group from 5-phosphoribose 1-diphosphate to orotate, leading to the formation of orotidine monophosphate (OMP). This chain is Orotate phosphoribosyltransferase, found in Laribacter hongkongensis (strain HLHK9).